Consider the following 893-residue polypeptide: DNA mismatch repair protein MutS (893 aa).

ATP is bound at residue 637–644; it reads GPNMGGKS.

This sequence belongs to the DNA mismatch repair MutS family.

In terms of biological role, this protein is involved in the repair of mismatches in DNA. It is possible that it carries out the mismatch recognition step. This protein has a weak ATPase activity. The chain is DNA mismatch repair protein MutS from Burkholderia thailandensis (strain ATCC 700388 / DSM 13276 / CCUG 48851 / CIP 106301 / E264).